Consider the following 235-residue polypeptide: Large ribosomal subunit protein uL1 (235 aa).

It belongs to the universal ribosomal protein uL1 family. As to quaternary structure, part of the 50S ribosomal subunit.

Functionally, binds directly to 23S rRNA. The L1 stalk is quite mobile in the ribosome, and is involved in E site tRNA release. In terms of biological role, protein L1 is also a translational repressor protein, it controls the translation of the L11 operon by binding to its mRNA. The protein is Large ribosomal subunit protein uL1 of Mycobacterium marinum (strain ATCC BAA-535 / M).